Here is a 78-residue protein sequence, read N- to C-terminus: MSTIEERVKKIVAEQLGVKEEEVTVEKSFVDDLGADSLDTVELVMALEEEFETEIPDEEAEKITTVQAAIDYVKAHQA.

Positions 2–77 (STIEERVKKI…AAIDYVKAHQ (76 aa)) constitute a Carrier domain. Ser37 is modified (O-(pantetheine 4'-phosphoryl)serine).

Belongs to the acyl carrier protein (ACP) family. Post-translationally, 4'-phosphopantetheine is transferred from CoA to a specific serine of apo-ACP by AcpS. This modification is essential for activity because fatty acids are bound in thioester linkage to the sulfhydryl of the prosthetic group.

The protein localises to the cytoplasm. Its pathway is lipid metabolism; fatty acid biosynthesis. Carrier of the growing fatty acid chain in fatty acid biosynthesis. The chain is Acyl carrier protein from Pseudomonas putida (strain ATCC 47054 / DSM 6125 / CFBP 8728 / NCIMB 11950 / KT2440).